The chain runs to 160 residues: Transcriptional repressor NrdR (160 aa).

The segment at 3–34 is a zinc-finger region; that stretch reads CPACNYNGTKVLDSRPVQDFGSIRRRRECESC. The ATP-cone domain occupies 49 to 139; sequence LIIVKKDGTR…VYKQFKDINV (91 aa).

The protein belongs to the NrdR family. It depends on Zn(2+) as a cofactor.

Negatively regulates transcription of bacterial ribonucleotide reductase nrd genes and operons by binding to NrdR-boxes. The chain is Transcriptional repressor NrdR from Exiguobacterium sibiricum (strain DSM 17290 / CCUG 55495 / CIP 109462 / JCM 13490 / 255-15).